A 296-amino-acid chain; its full sequence is Ribonuclease MRP protein subunit POP4 (296 aa).

Disordered regions lie at residues 29 to 74 (LLQQ…VDPK) and 148 to 173 (SASG…KRLK). The span at 36-56 (KNEKDKKGTSDVDVSMKESHQ) shows a compositional bias: basic and acidic residues. Residues 57–66 (ADSLPTPSKT) are compositionally biased toward polar residues. A Nuclear localization signal motif is present at residues 160 to 167 (SKRSKSRM). A compositionally biased stretch (basic residues) spans 163–173 (SKSRMSMKRLK).

It belongs to the eukaryotic/archaeal RNase P protein component 1 family. Component of nuclear RNase MRP complexes. Several subunits of RNase P are also part of the RNase MRP complex. RNase MRP consists of a catalytic RNA moiety and several protein subunits.

It is found in the nucleus. Component of the MRP ribonuclease complex, which cleaves pre-rRNA sequences. Required for rRNA maturation, including 5.8S rRNA processing. Seems not involved in tRNA maturation. The chain is Ribonuclease MRP protein subunit POP4 from Arabidopsis thaliana (Mouse-ear cress).